Reading from the N-terminus, the 276-residue chain is MSASLPAYSQPRNAGALGVICTRSFPAVVGTADMMLKSADVTLIGYEKTGSGFCTAIIRGGYADIKLALEAGVATARQFEQYVSSTILPRPQGNLEAVLPISRRLSQEAMATRSHQNVGAIGLIETNGFPALVGAADAMLKSANVKLICYEKTGSGLCTAIVQGTVSNVTVAVEAGMYAAERIGQLNAIMVIPRPLDDLMDSLPEPQSDSEAAQPLQLPLRVREKQPLLELPELERQPIAIEAPRLLAEERQSALELAQETPLAEPLELPNPRDDQ.

2 BMC domains span residues 16 to 100 (ALGV…AVLP) and 120 to 204 (AIGL…DSLP). Disordered stretches follow at residues 200-219 (MDSL…LQLP) and 252-276 (QSAL…RDDQ).

The protein belongs to the bacterial microcompartments protein family. Homooligomerizes, possibly as a trimer, interacts with CcmK2 in the carboxysome.

The protein localises to the carboxysome. Required for formation of the carboxysome, a polyhedral inclusion where RuBisCO (ribulose bisphosphate carboxylase, rbcL-rbcS) is sequestered. Required for recruitment of major shell protein CcmK2 to the pre-carboxysome. Suggested to be a carboxysome shell protein, but it is not detected in gels, mass spectrometry or by protein sequencing. In terms of biological role, beta-carboxysome assembly initiates when soluble RuBisCO is condensed into a liquid matrix in a pre-carboxysome by the RbcS-like domains of probably both CcmM58 and CcmM35. CcmN interacts with the N-terminus of CcmM58, and then recruits the CcmK2 major shell protein via CcmN's encapsulation peptide. Shell formation requires CcmK proteins and CcmO. CcmL caps the otherwise elongated carboxysome. Once fully encapsulated carboxysomes are formed, they migrate within the cell probably via interactions with the cytoskeleton. The chain is Carboxysome assembly protein CcmO from Synechococcus elongatus (strain ATCC 33912 / PCC 7942 / FACHB-805) (Anacystis nidulans R2).